A 225-amino-acid chain; its full sequence is AA9 family lytic polysaccharide monooxygenase A (225 aa).

An N-terminal signal peptide occupies residues 1–17; that stretch reads MLTTTFALLTAALGVSA. Cu(2+)-binding residues include histidine 18 and histidine 85. 2 disulfide bridges follow: cysteine 55–cysteine 173 and cysteine 143–cysteine 225. O2 contacts are provided by histidine 159 and glutamine 168. Tyrosine 170 is a binding site for Cu(2+).

Belongs to the polysaccharide monooxygenase AA9 family. The cofactor is Cu(2+).

Its subcellular location is the secreted. The catalysed reaction is [(1-&gt;4)-beta-D-glucosyl]n+m + reduced acceptor + O2 = 4-dehydro-beta-D-glucosyl-[(1-&gt;4)-beta-D-glucosyl]n-1 + [(1-&gt;4)-beta-D-glucosyl]m + acceptor + H2O.. Its activity is regulated as follows. Is able to utilize various natural phenolic compounds as reducing agents. Most of these reducing agents are present in plants, either free or as lignin building blocks, such as sinapic acid, or as flavonoids such as catechin and dopamine. Phenolic compounds with 1,2-benzenediol and 1,2,3-benzenetriol moieties yield the highest release of oxidized and non-oxidized glucooligosaccharides from cellulose compared to monophenols or sulfur-containing compounds. Its function is as follows. Lytic polysaccharide monooxygenase (LPMO) that depolymerizes crystalline and amorphous polysaccharides via the oxidation of scissile alpha- or beta-(1-4)-glycosidic bonds, yielding C1 or C4 oxidation products. Catalysis by LPMOs requires the reduction of the active-site copper from Cu(II) to Cu(I) by a reducing agent and H(2)O(2) or O(2) as a cosubstrate. Shows oxidative cleavage of xylan in addition to cellulose. Shows a strong synergistic effect with endoglucanase I (EGI) with a 16-fold higher release of detected oligosaccharides. This Thermothelomyces thermophilus (strain ATCC 42464 / BCRC 31852 / DSM 1799) (Sporotrichum thermophile) protein is AA9 family lytic polysaccharide monooxygenase A.